We begin with the raw amino-acid sequence, 248 residues long: MARTFFIGGNFKMNGSKASIKEIVDRLNGASIPSNVEVVIAPPAIYLDHAVALNKRKEVKISAQNAYSKASGAYTGENSVEQIKDVGAEWVILGHSERRTYFNETDEIVAEKTKFALDSGVKVILCIGETLEEKQQNITLQVVQRQLQAVLEKVQDWTNVVVAYEPVWAIGTGLAATAEDAQDIHHSIREFLAEKLSRDVADSVRILYGGSANGKNAVTFKDKADVDGFLVGGASLKPEFVDIINSRV.

Positions 10 and 12 each coordinate substrate. Histidine 95 acts as the Electrophile in catalysis. Glutamate 165 acts as the Proton acceptor in catalysis.

This sequence belongs to the triosephosphate isomerase family. As to quaternary structure, homodimer.

It carries out the reaction D-glyceraldehyde 3-phosphate = dihydroxyacetone phosphate. It functions in the pathway carbohydrate biosynthesis; gluconeogenesis. It participates in carbohydrate degradation; glycolysis; D-glyceraldehyde 3-phosphate from glycerone phosphate: step 1/1. This Kluyveromyces lactis (strain ATCC 8585 / CBS 2359 / DSM 70799 / NBRC 1267 / NRRL Y-1140 / WM37) (Yeast) protein is Triosephosphate isomerase (TPI1).